A 196-amino-acid polypeptide reads, in one-letter code: Zinc finger C2H2 protein ECU03_0940 (196 aa).

2 C2H2-type zinc fingers span residues 130–155 (YACE…KEGH) and 166–191 (YVCP…KHYH).

The sequence is that of Zinc finger C2H2 protein ECU03_0940 from Encephalitozoon cuniculi (strain GB-M1) (Microsporidian parasite).